A 373-amino-acid polypeptide reads, in one-letter code: Flagellar P-ring protein 1 (373 aa).

The first 24 residues, 1 to 24 (MRGISRLYWSLVLICFAFAPIVEA), serve as a signal peptide directing secretion.

It belongs to the FlgI family. As to quaternary structure, the basal body constitutes a major portion of the flagellar organelle and consists of four rings (L,P,S, and M) mounted on a central rod.

It is found in the periplasm. Its subcellular location is the bacterial flagellum basal body. Its function is as follows. Assembles around the rod to form the L-ring and probably protects the motor/basal body from shearing forces during rotation. This is Flagellar P-ring protein 1 from Hahella chejuensis (strain KCTC 2396).